A 341-amino-acid polypeptide reads, in one-letter code: Aspartate carbamoyltransferase catalytic subunit (341 aa).

2 residues coordinate carbamoyl phosphate: Arg89 and Thr90. Lys117 is an L-aspartate binding site. 3 residues coordinate carbamoyl phosphate: Arg139, His169, and Gln172. Residues Arg202 and Arg257 each coordinate L-aspartate. Gly298 and Pro299 together coordinate carbamoyl phosphate.

This sequence belongs to the aspartate/ornithine carbamoyltransferase superfamily. ATCase family. Heterododecamer (2C3:3R2) of six catalytic PyrB chains organized as two trimers (C3), and six regulatory PyrI chains organized as three dimers (R2).

It catalyses the reaction carbamoyl phosphate + L-aspartate = N-carbamoyl-L-aspartate + phosphate + H(+). It functions in the pathway pyrimidine metabolism; UMP biosynthesis via de novo pathway; (S)-dihydroorotate from bicarbonate: step 2/3. Its function is as follows. Catalyzes the condensation of carbamoyl phosphate and aspartate to form carbamoyl aspartate and inorganic phosphate, the committed step in the de novo pyrimidine nucleotide biosynthesis pathway. The polypeptide is Aspartate carbamoyltransferase catalytic subunit (Paraburkholderia xenovorans (strain LB400)).